The primary structure comprises 245 residues: Phycocyanobilin:ferredoxin oxidoreductase (245 aa).

Belongs to the HY2 family.

It carries out the reaction (2R,3Z)-phycocyanobilin + 4 oxidized [2Fe-2S]-[ferredoxin] = biliverdin IXalpha + 4 reduced [2Fe-2S]-[ferredoxin] + 4 H(+). Catalyzes the four-electron reduction of biliverdin IX-alpha (2-electron reduction at both the A and D rings); the reaction proceeds via an isolatable 2-electron intermediate, 181,182-dihydrobiliverdin. Upon overexpression in E.coli with PCB:ferredoxin oxidoreductase, CpeS and either CpcB or PecB permits synthesis of phycocyanin-coupled CpcB or PecB. The sequence is that of Phycocyanobilin:ferredoxin oxidoreductase (pcyA) from Nostoc sp. (strain PCC 7120 / SAG 25.82 / UTEX 2576).